The chain runs to 874 residues: Alanine--tRNA ligase (874 aa).

The Zn(2+) site is built by His563, His567, Cys665, and His669.

This sequence belongs to the class-II aminoacyl-tRNA synthetase family. Requires Zn(2+) as cofactor.

It is found in the cytoplasm. The enzyme catalyses tRNA(Ala) + L-alanine + ATP = L-alanyl-tRNA(Ala) + AMP + diphosphate. Its function is as follows. Catalyzes the attachment of alanine to tRNA(Ala) in a two-step reaction: alanine is first activated by ATP to form Ala-AMP and then transferred to the acceptor end of tRNA(Ala). Also edits incorrectly charged Ser-tRNA(Ala) and Gly-tRNA(Ala) via its editing domain. The chain is Alanine--tRNA ligase from Histophilus somni (strain 129Pt) (Haemophilus somnus).